The primary structure comprises 205 residues: MPVGLACNADDVLSIAVLCGGSSPEREVSLAGGKRIADALGRLGHRAAVVDLNRESAHQLLAMAPDLVYNALHGGQGEDGCASGLLDILGLAYTHSRVAASSVGMDKVLTKHVLKSLGIDFPEFSVLTKEEVLSAKEVMPYPFVIKPICGGSTIGVHAIFSRSEYLDLSVHADALEGRMLVEEYIPGQEVHTAVFLGRAIGTMEF.

One can recognise an ATP-grasp domain in the interval 111-205; sequence KHVLKSLGID…LGRAIGTMEF (95 aa). Residue 139 to 190 participates in ATP binding; sequence MPYPFVIKPICGGSTIGVHAIFSRSEYLDLSVHADALEGRMLVEEYIPGQEV.

This sequence belongs to the D-alanine--D-alanine ligase family. It depends on Mg(2+) as a cofactor. Requires Mn(2+) as cofactor.

Its subcellular location is the cytoplasm. It carries out the reaction 2 D-alanine + ATP = D-alanyl-D-alanine + ADP + phosphate + H(+). Its pathway is cell wall biogenesis; peptidoglycan biosynthesis. Its function is as follows. Cell wall formation. The chain is D-alanine--D-alanine ligase (ddl) from Anaplasma centrale.